Here is a 916-residue protein sequence, read N- to C-terminus: Chitin synthase B (916 aa).

Disordered stretches follow at residues 1–84 (MAYQ…AGFH) and 114–141 (SPYARSETSSTEAWRQRQAPGGGGGGGL). An N-linked (GlcNAc...) asparagine glycan is attached at asparagine 18. The span at 60–75 (RGTSPVRPTSGYSLTE) shows a compositional bias: polar residues. Asparagine 546 carries N-linked (GlcNAc...) asparagine glycosylation. The next 7 membrane-spanning stretches (helical) occupy residues 572 to 594 (MFFLHIQMLYNVFNTILTWFSLA), 628 to 648 (IINTIVKYVYLGLLLLQFILA), 663 to 683 (SFVVFGIIQIYVVVDALYLVV), 715 to 735 (IIIIALAATFGLYFVASFMYL), 743 to 763 (SFPAYMFVQSSYINVLNVYAF), 845 to 865 (LVTLWIFSNAFLAVCITSDGM), and 884 to 904 (ALLWSNAAVALVRFIGACWFL).

This sequence belongs to the chitin synthase family. Class III subfamily.

It localises to the cell membrane. It carries out the reaction [(1-&gt;4)-N-acetyl-beta-D-glucosaminyl](n) + UDP-N-acetyl-alpha-D-glucosamine = [(1-&gt;4)-N-acetyl-beta-D-glucosaminyl](n+1) + UDP + H(+). Its function is as follows. Polymerizes chitin, a structural polymer of the cell wall and septum, by transferring the sugar moiety of UDP-GlcNAc to the non-reducing end of the growing chitin polymer. Involved in hyphal growth and more particularly in branching. The polypeptide is Chitin synthase B (Aspergillus oryzae (strain ATCC 42149 / RIB 40) (Yellow koji mold)).